The following is a 74-amino-acid chain: Brevinin-2Tb (74 aa).

An N-terminal signal peptide occupies residues 1–22 (MFTMKKSLLLFFFLGTISLSLC). Residues 23-40 (QEERNADEDDGEMTEEEK) constitute a propeptide that is removed on maturation. Cysteine 68 and cysteine 74 form a disulfide bridge.

This sequence belongs to the frog skin active peptide (FSAP) family. Brevinin subfamily. As to expression, expressed by the skin glands.

It localises to the secreted. Antimicrobial peptide. In Rana temporaria (European common frog), this protein is Brevinin-2Tb.